We begin with the raw amino-acid sequence, 141 residues long: Histone H2B (141 aa).

Residues 1-10 are compositionally biased toward basic and acidic residues; that stretch reads MPPKAAEKKP. Positions 1–49 are disordered; sequence MPPKAAEKKPSTGGKAPAGGKAPAEKKEAGKKTAAAASGDKKKRGKTRK. An N6-acetyllysine; alternate mark is found at K8 and K9. Glycyl lysine isopeptide (Lys-Gly) (interchain with G-Cter in SUMO); alternate cross-links involve residues K8 and K9. A compositionally biased stretch (low complexity) spans 11-22; that stretch reads STGGKAPAGGKA. K15 bears the N6-acetyllysine mark. At K26 the chain carries N6-acetyllysine; alternate. Residue K26 forms a Glycyl lysine isopeptide (Lys-Gly) (interchain with G-Cter in SUMO); alternate linkage. Residue K27 forms a Glycyl lysine isopeptide (Lys-Gly) (interchain with G-Cter in SUMO) linkage. Residue K135 forms a Glycyl lysine isopeptide (Lys-Gly) (interchain with G-Cter in ubiquitin) linkage.

It belongs to the histone H2B family. The nucleosome is a histone octamer containing two molecules each of H2A, H2B, H3 and H4 assembled in one H3-H4 heterotetramer and two H2A-H2B heterodimers. The octamer wraps approximately 147 bp of DNA. In terms of processing, monoubiquitinated by the ubc2-bre1 complex to form H2BK123ub1. H2BK123ub1 gives a specific tag for epigenetic transcriptional activation and is also prerequisite for H3K4me and H3K79me formation. H2BK123ub1 also modulates the formation of double-strand breaks during meiosis and is a prerequisite for DNA-damage checkpoint activation. Post-translationally, acetylated by gcn5 to form H2BK11ac and H2BK16ac. H2BK16ac can also be formed by esa1. Acetylation of N-terminal lysines and particularly formation of H2BK11acK16ac has a positive effect on transcription. Sumoylation to form H2BK6su or H2BK7su, and probably also H2BK16su or H2BK17su, occurs preferentially near the telomeres and represses gene transcription.

It is found in the nucleus. The protein resides in the chromosome. Its function is as follows. Core component of nucleosome. Nucleosomes wrap and compact DNA into chromatin, limiting DNA accessibility to the cellular machineries which require DNA as a template. Histones thereby play a central role in transcription regulation, DNA repair, DNA replication and chromosomal stability. DNA accessibility is regulated via a complex set of post-translational modifications of histones, also called histone code, and nucleosome remodeling. This chain is Histone H2B (htb1), found in Aspergillus niger (strain ATCC MYA-4892 / CBS 513.88 / FGSC A1513).